The chain runs to 184 residues: Ribosome-recycling factor (184 aa).

Belongs to the RRF family.

The protein resides in the cytoplasm. In terms of biological role, responsible for the release of ribosomes from messenger RNA at the termination of protein biosynthesis. May increase the efficiency of translation by recycling ribosomes from one round of translation to another. The sequence is that of Ribosome-recycling factor from Acholeplasma laidlawii (strain PG-8A).